An 876-amino-acid chain; its full sequence is Exonuclease mut-7 homolog (876 aa).

The 55-residue stretch at 517–571 folds into the 3'-5' exonuclease domain; that stretch reads GLSLLVQQVLGTALDKTQQLSNWDRRPLCEEQVIYAAADAYCLLEVHQALCREPA. 2 disordered regions span residues 578 to 607 and 751 to 781; these read DLAG…APAA and SHQE…AAPE.

The protein belongs to the mut-7 family. It depends on Mg(2+) as a cofactor.

Possesses 3'-5' exoribonuclease activity. Required for 3'-end trimming of AGO1-bound miRNAs. The chain is Exonuclease mut-7 homolog (EXD3) from Homo sapiens (Human).